The following is a 464-amino-acid chain: tRNA modification GTPase MnmE (464 aa).

(6S)-5-formyl-5,6,7,8-tetrahydrofolate-binding residues include Arg27, Glu90, and Lys129. Residues 222–384 (GVTLVLAGSV…LYDKIKTLIS (163 aa)) enclose the TrmE-type G domain. GTP is bound by residues 232–237 (NAGKSS), 251–257 (SSYPGTT), and 276–279 (DTAG). Mg(2+) contacts are provided by Ser236 and Thr257. Lys464 is a binding site for (6S)-5-formyl-5,6,7,8-tetrahydrofolate.

Belongs to the TRAFAC class TrmE-Era-EngA-EngB-Septin-like GTPase superfamily. TrmE GTPase family. Homodimer. Heterotetramer of two MnmE and two MnmG subunits. K(+) serves as cofactor.

The protein localises to the cytoplasm. Functionally, exhibits a very high intrinsic GTPase hydrolysis rate. Involved in the addition of a carboxymethylaminomethyl (cmnm) group at the wobble position (U34) of certain tRNAs, forming tRNA-cmnm(5)s(2)U34. This is tRNA modification GTPase MnmE from Borrelia garinii subsp. bavariensis (strain ATCC BAA-2496 / DSM 23469 / PBi) (Borreliella bavariensis).